The sequence spans 311 residues: Succinate dehydrogenase [ubiquinone] iron-sulfur subunit 2, mitochondrial (311 aa).

The N-terminal 63 residues, 1 to 63 (MILRRTLPRL…EEIRDHRRGD (63 aa)), are a transit peptide targeting the mitochondrion. The tract at residues 1–70 (MILRRTLPRL…RGDAAAASPA (70 aa)) is disordered. The segment covering 51 to 63 (AKEEEIRDHRRGD) has biased composition (basic and acidic residues). A 2Fe-2S ferredoxin-type domain is found at 77 to 168 (FRVYRWSPDA…ATTVTPLPHM (92 aa)). Residues Cys128, Cys133, and Cys148 each coordinate [2Fe-2S] cluster. A 4Fe-4S ferredoxin-type domain is found at 211–241 (ERKRLDGLYECILCACCSAACPSYWWNAEAF). The [4Fe-4S] cluster site is built by Cys221, Cys224, and Cys227. Residue Cys231 coordinates [3Fe-4S] cluster. Trp236 serves as a coordination point for a ubiquinone. [3Fe-4S] cluster contacts are provided by Cys279 and Cys285. Cys289 contacts [4Fe-4S] cluster.

This sequence belongs to the succinate dehydrogenase/fumarate reductase iron-sulfur protein family. Component of complex II composed of eight subunits in plants: four classical SDH subunits SDH1, SDH2, SDH3 and SDH4 (a flavoprotein (FP), an iron-sulfur protein (IP), and a cytochrome b composed of a large and a small subunit.), as well as four subunits unknown in mitochondria from bacteria and heterotrophic eukaryotes. [2Fe-2S] cluster is required as a cofactor. Requires [3Fe-4S] cluster as cofactor. [4Fe-4S] cluster serves as cofactor.

It is found in the mitochondrion inner membrane. It carries out the reaction a quinone + succinate = fumarate + a quinol. The protein operates within carbohydrate metabolism; tricarboxylic acid cycle; fumarate from succinate (eukaryal route): step 1/1. Its function is as follows. Iron-sulfur protein (IP) subunit of succinate dehydrogenase (SDH) that is involved in complex II of the mitochondrial electron transport chain and is responsible for transferring electrons from succinate to ubiquinone (coenzyme Q). This chain is Succinate dehydrogenase [ubiquinone] iron-sulfur subunit 2, mitochondrial, found in Oryza sativa subsp. japonica (Rice).